We begin with the raw amino-acid sequence, 510 residues long: 2,3-bisphosphoglycerate-independent phosphoglycerate mutase (510 aa).

Positions 12 and 62 each coordinate Mn(2+). Catalysis depends on Ser62, which acts as the Phosphoserine intermediate. Substrate-binding positions include His123, 153-154, Arg185, Arg191, 260-263, and Lys335; these read RD and RPDR. Mn(2+) contacts are provided by Asp402, His406, Asp443, His444, and His461.

It belongs to the BPG-independent phosphoglycerate mutase family. Monomer. Mn(2+) serves as cofactor.

It carries out the reaction (2R)-2-phosphoglycerate = (2R)-3-phosphoglycerate. Its pathway is carbohydrate degradation; glycolysis; pyruvate from D-glyceraldehyde 3-phosphate: step 3/5. Functionally, catalyzes the interconversion of 2-phosphoglycerate and 3-phosphoglycerate. This is 2,3-bisphosphoglycerate-independent phosphoglycerate mutase from Listeria monocytogenes serotype 4b (strain F2365).